Reading from the N-terminus, the 222-residue chain is PKHD-type hydroxylase cce_3668 (222 aa).

A Fe2OG dioxygenase domain is found at 78–175; sequence HIHSLRFSRY…RLVVVGWVHS (98 aa). Positions 96, 98, and 156 each coordinate Fe cation. Arg-166 serves as a coordination point for 2-oxoglutarate.

Fe(2+) serves as cofactor. Requires L-ascorbate as cofactor.

This chain is PKHD-type hydroxylase cce_3668, found in Crocosphaera subtropica (strain ATCC 51142 / BH68) (Cyanothece sp. (strain ATCC 51142)).